Here is a 946-residue protein sequence, read N- to C-terminus: Serine/threonine-protein kinase PLK4 (946 aa).

The 254-residue stretch at 12–265 folds into the Protein kinase domain; sequence FKVLNLLGKG…LSSVLDHAFM (254 aa). ATP is bound by residues 18 to 26 and lysine 41; that span reads LGKGSFACV. Aspartate 136 functions as the Proton acceptor in the catalytic mechanism. Residues 330-395 form a disordered region; that stretch reads HPAERSNGGS…TYGKPSSFSE (66 aa). A compositionally biased stretch (polar residues) spans 378 to 394; that stretch reads RSGTSQSQTYGKPSSFS. Residues 566-679 form the Cryptic POLO box 1 (CPB1) domain; the sequence is TLRSIISPLN…AKFIQLVRSK (114 aa). The 113-residue stretch at 680–792 folds into the Cryptic POLO box 2 (CPB2) domain; it reads MPKVTYYTRY…GRRPAITESP (113 aa). Residues 789–828 are disordered; it reads TESPRTQLTVDSARERKDEQSSANRVLHSSATSPPQIPNI. The segment covering 809-828 has biased composition (polar residues); sequence SSANRVLHSSATSPPQIPNI. The POLO box domain occupies 864–942; it reads QVLKSVFVEN…LSSILMLFAS (79 aa).

Belongs to the protein kinase superfamily. Ser/Thr protein kinase family. CDC5/Polo subfamily. In terms of assembly, homodimer. In terms of processing, ubiquitinated; leading to its degradation by the proteasome.

The protein resides in the cytoplasm. It localises to the cytoskeleton. The protein localises to the microtubule organizing center. Its subcellular location is the centrosome. It is found in the centriole. The catalysed reaction is L-seryl-[protein] + ATP = O-phospho-L-seryl-[protein] + ADP + H(+). It carries out the reaction L-threonyl-[protein] + ATP = O-phospho-L-threonyl-[protein] + ADP + H(+). Its function is as follows. Serine/threonine-protein kinase that plays a central role in centriole duplication. Able to trigger procentriole formation on the surface of the parental centriole cylinder, leading to the recruitment of centriole biogenesis proteins such as sass6, cpap, ccp110, cep135 and gamma-tubulin. When overexpressed, it is able to induce centrosome amplification through the simultaneous generation of multiple procentrioles adjoining each parental centriole during S phase. Its central role in centriole replication suggests a possible role in tumorigenesis, centrosome aberrations being frequently observed in tumors. Also involved in deuterosome-mediated centriole amplification in multiciliated that can generate more than 100 centrioles. In Xenopus tropicalis (Western clawed frog), this protein is Serine/threonine-protein kinase PLK4.